The primary structure comprises 367 residues: Ribosomal lysine N-methyltransferase 5 (367 aa).

Residues 55 to 74 (EGGRKKKRVRRRNKASSVEE) form a disordered region. Positions 58–68 (RKKKRVRRRNK) are enriched in basic residues. S-adenosyl-L-methionine-binding positions include Trp110, 170-172 (GAG), Asp192, Trp256, and Met288.

Belongs to the class I-like SAM-binding methyltransferase superfamily. RKM5 family.

In terms of biological role, S-adenosyl-L-methionine-dependent protein-lysine N-methyltransferase that monomethylates 60S ribosomal protein L1 (RPL1A and RPL1B) at 'Lys-46'. This chain is Ribosomal lysine N-methyltransferase 5 (RKM5), found in Saccharomyces cerevisiae (strain RM11-1a) (Baker's yeast).